The primary structure comprises 251 residues: Chorismate mutase (251 aa).

Residues 1-251 (MSLVNEKLKL…EVDYLLARLL (251 aa)) form the Chorismate mutase domain. Arg74, Arg75, Asn134, Gly136, and Ser137 together coordinate L-tyrosine. Positions 134, 136, and 137 each coordinate L-tryptophan.

Homodimer.

It is found in the cytoplasm. It carries out the reaction chorismate = prephenate. It functions in the pathway metabolic intermediate biosynthesis; prephenate biosynthesis; prephenate from chorismate: step 1/1. Each dimer has two allosteric binding sites that can bind the regulatory effectors tryptophan or tyrosine. Can bind either one tryptophan or one tyrosine, two tryptophan or two tyrosine or one tryptophan and one tyrosine, which differentially affect the catalytic activity. Activated by tryptophan and subject to feedback inhibition by tyrosine. In the presence of both tryptophan and tyrosine, the enzyme is in the activated state. Its function is as follows. Catalyzes the Claisen rearrangement of chorismate to prephenate. Acts at the first branch point in the aromatic amino acid pathway where it steers biosynthesis towards phenylalanine and tyrosine, and away from tryptophan. The polypeptide is Chorismate mutase (Schizosaccharomyces pombe (strain 972 / ATCC 24843) (Fission yeast)).